Reading from the N-terminus, the 66-residue chain is Putative alpha-neurotoxin RjAa44 (66 aa).

The LCN-type CS-alpha/beta domain maps to 1-60 (KEGYPVDWGNCKYECMSDAYCKDLCADRKAKSGYCYKLNWSCYCEGLPDDSPIKTNGHCR). Disulfide bonds link Cys-11-Cys-59, Cys-15-Cys-35, Cys-21-Cys-42, and Cys-25-Cys-44.

This sequence belongs to the long (4 C-C) scorpion toxin superfamily. Sodium channel inhibitor family. Alpha subfamily. In terms of tissue distribution, expressed by the venom gland.

Its subcellular location is the secreted. In terms of biological role, alpha toxins bind voltage-independently at site-3 of sodium channels (Nav) and inhibit the inactivation of the activated channels, thereby blocking neuronal transmission. This Rhopalurus junceus (Caribbean blue scorpion) protein is Putative alpha-neurotoxin RjAa44.